A 117-amino-acid chain; its full sequence is DNA-directed RNA polymerase subunit omega (117 aa).

Positions 96-105 (KEEAEEEAKQ) are enriched in basic and acidic residues. The interval 96–117 (KEEAEEEAKQKNSRAAKAAAAE) is disordered. Low complexity predominate over residues 108–117 (SRAAKAAAAE).

Belongs to the RNA polymerase subunit omega family. As to quaternary structure, the RNAP catalytic core consists of 2 alpha, 1 beta, 1 beta' and 1 omega subunit. When a sigma factor is associated with the core the holoenzyme is formed, which can initiate transcription.

The enzyme catalyses RNA(n) + a ribonucleoside 5'-triphosphate = RNA(n+1) + diphosphate. Functionally, promotes RNA polymerase assembly. Latches the N- and C-terminal regions of the beta' subunit thereby facilitating its interaction with the beta and alpha subunits. The protein is DNA-directed RNA polymerase subunit omega of Lactococcus lactis subsp. cremoris (strain SK11).